A 602-amino-acid chain; its full sequence is SAGA complex subunit SPT8 (602 aa).

The tract at residues 1 to 141 is disordered; that stretch reads MDEVDDILIN…REASSSTHEA (141 aa). Composition is skewed to acidic residues over residues 14-23 and 36-75; these read VDDEEDDEEM and EGND…DGED. Thr85 bears the Phosphothreonine mark. Phosphoserine is present on residues Ser108, Ser123, and Ser131. WD repeat units follow at residues 173–212 and 305–346; these read PIQT…EGKL and GHTQ…NEFK. The disordered stretch occupies residues 366 to 418; it reads VSGNVNSGKENENADDDMDSLFGDEDEDEKQDAGNEPVETGDGSNGEENKEQI. Positions 378–395 are enriched in acidic residues; that stretch reads NADDDMDSLFGDEDEDEK. WD repeat units follow at residues 415 to 454, 506 to 544, and 560 to 600; these read KEQI…SPAL, SISG…DASN, and HHGG…YDID. Ser451 is subject to Phosphoserine.

This sequence belongs to the WD repeat SPT8 family. In terms of assembly, component of the 1.8 MDa SAGA (Spt-Ada-Gcn5 acetyltransferase) complex, which is composed of 19 subunits TRA1, SPT7, TAF5, NGG1/ADA3, SGF73, SPT20/ADA5, SPT8, TAF12, TAF6, HFI1/ADA1, UBP8, GCN5, ADA2, SPT3, SGF29, TAF10, TAF9, SGF11 and SUS1. The SAGA complex is composed of 4 modules, namely the HAT (histone acetyltransferase) module (GCN5, ADA2, NGG1/ADA3 and SGF29), the DUB (deubiquitinating) module (UBP8, SGF11, SGF73 and SUS1), the core or TAF (TBP-associated factor) module (TAF5, TAF6, TAF9, TAF10 and TAF12), and the Tra1 or SPT (Suppressor of Ty) module (TRA1, HFI1/ADA1, SPT3, SPT7, SPT8 and SPT20/ADA5). The Tra1/SPT module binds activators, the core module recruits TBP (TATA-binding protein), the HAT module contains the histone H3 acetyltransferase GCN5, and the DUB module comprises the histone H2B deubiquitinase UBP8.

The protein localises to the nucleus. Its function is as follows. Component of the transcription coactivator SAGA complex. SAGA acts as a general cofactor required for essentially all RNA polymerase II transcription. At the promoters, SAGA is required for transcription pre-initiation complex (PIC) recruitment. It influences RNA polymerase II transcriptional activity through different activities such as TBP interaction (via core/TAF module) and promoter selectivity, interaction with transcription activators (via Tra1/SPT module), and chromatin modification through histone acetylation (via HAT module) and deubiquitination (via DUB module). SAGA preferentially acetylates histones H3 (to form H3K9ac, H3K14ac, H3K18ac and H3K23ac) and H2B and deubiquitinates histone H2B. SAGA interacts with DNA via upstream activating sequences (UASs). During SAGA-mediated transcriptional inhibition, SPT3 and SPT8 prevent binding of TBP to the TATA box. This Saccharomyces cerevisiae (strain ATCC 204508 / S288c) (Baker's yeast) protein is SAGA complex subunit SPT8 (SPT8).